Here is a 163-residue protein sequence, read N- to C-terminus: 3-dehydroquinate dehydratase (163 aa).

Catalysis depends on Y28, which acts as the Proton acceptor. Substrate contacts are provided by N80, H86, and D93. H106 serves as the catalytic Proton donor. Substrate contacts are provided by residues 107–108 (IS) and R117.

The protein belongs to the type-II 3-dehydroquinase family. Homododecamer.

It carries out the reaction 3-dehydroquinate = 3-dehydroshikimate + H2O. It functions in the pathway metabolic intermediate biosynthesis; chorismate biosynthesis; chorismate from D-erythrose 4-phosphate and phosphoenolpyruvate: step 3/7. Functionally, catalyzes a trans-dehydration via an enolate intermediate. This Bradyrhizobium sp. (strain BTAi1 / ATCC BAA-1182) protein is 3-dehydroquinate dehydratase.